A 374-amino-acid polypeptide reads, in one-letter code: Alcohol dehydrogenase 1 (374 aa).

The residue at position 1 (Ser-1) is an N-acetylserine. Residues Cys-46, His-67, Cys-97, Cys-100, Cys-103, Cys-111, and Cys-174 each contribute to the Zn(2+) site. NAD(+)-binding positions include 199 to 204 (GLGGVG), Asp-223, Lys-228, 292 to 294 (VGV), and Arg-369.

Belongs to the zinc-containing alcohol dehydrogenase family. Class-I subfamily. Homodimer. Zn(2+) serves as cofactor.

It localises to the cytoplasm. The catalysed reaction is a primary alcohol + NAD(+) = an aldehyde + NADH + H(+). It catalyses the reaction a secondary alcohol + NAD(+) = a ketone + NADH + H(+). This Struthio camelus (Common ostrich) protein is Alcohol dehydrogenase 1 (ADH1).